The chain runs to 120 residues: Glycine cleavage system H protein (120 aa).

Positions 17–99 (VATVGITAHA…MGAGWFFKLK (83 aa)) constitute a Lipoyl-binding domain. At Lys-58 the chain carries N6-lipoyllysine.

Belongs to the GcvH family. In terms of assembly, the glycine cleavage system is composed of four proteins: P, T, L and H. Requires (R)-lipoate as cofactor.

Its function is as follows. The glycine cleavage system catalyzes the degradation of glycine. The H protein shuttles the methylamine group of glycine from the P protein to the T protein. This Rhizobium rhizogenes (strain K84 / ATCC BAA-868) (Agrobacterium radiobacter) protein is Glycine cleavage system H protein.